The following is a 90-amino-acid chain: Putative beta-neurotoxin RjAa14F (90 aa).

An N-terminal signal peptide occupies residues 1 to 18; that stretch reads MKILIFIIASFMLIGVEC. Residues 19 to 89 form the LCN-type CS-alpha/beta domain; it reads KEGYPTNSEG…VWDPNNNKCV (71 aa). Cystine bridges form between cysteine 29-cysteine 88, cysteine 33-cysteine 62, cysteine 40-cysteine 69, and cysteine 44-cysteine 71.

This sequence belongs to the long (4 C-C) scorpion toxin superfamily. Sodium channel inhibitor family. Beta subfamily. Expressed by the venom gland.

The protein resides in the secreted. Functionally, beta toxins bind voltage-independently at site-4 of sodium channels (Nav) and shift the voltage of activation toward more negative potentials thereby affecting sodium channel activation and promoting spontaneous and repetitive firing. The chain is Putative beta-neurotoxin RjAa14F from Rhopalurus junceus (Caribbean blue scorpion).